A 376-amino-acid chain; its full sequence is NADPH oxidase organizer 1 (376 aa).

A PX domain is found at 1 to 131 (MAGPRYPVSV…GFFAPQPLDL (131 aa)). 2 consecutive SH3 domains span residues 163–225 (LEAQ…EAAP) and 237–296 (SSGP…PEGL). The disordered stretch occupies residues 302–376 (GTGFRGGDDP…DSVPHPTTEQ (75 aa)). Positions 326-335 (APPPTVPTRP) are enriched in pro residues. Positions 328–337 (PPTVPTRPSP) are proline-rich region; mediates mutually exclusive interactions with itself and NOXA1.

As to quaternary structure, interacts with NOX1, NOXA1, CYBA/p22phox and NCF2/p67phox. Interacts with SH3PXD2A and SH3PXD2B. As to expression, expressed in testis, small and large intestines, liver, kidney and pancreas. Isoform 3 is mainly expressed in colon. Isoform 1 is preferentially expressed in testis.

The protein localises to the cell membrane. Constitutively potentiates the superoxide-generating activity of NOX1 and NOX3 and is required for the biogenesis of otoconia/otolith, which are crystalline structures of the inner ear involved in the perception of gravity. Isoform 3 is more potent than isoform 1 in activating NOX3. Together with NOXA1, may also substitute to NCF1/p47phox and NCF2/p67phox in supporting the phagocyte NOX2/gp91phox superoxide-generating activity. This Homo sapiens (Human) protein is NADPH oxidase organizer 1 (NOXO1).